The chain runs to 761 residues: Prolyl oligopeptidase A (761 aa).

Active-site charge relay system residues include Ser-606, Asp-690, and His-726.

The protein belongs to the peptidase S9A family. As to quaternary structure, monomer.

It catalyses the reaction Hydrolysis of Pro-|-Xaa &gt;&gt; Ala-|-Xaa in oligopeptides.. Housekeeping prolyl oligopeptidase (POP) that behaves like a conventional POP by cleaving peptide bonds on the C-terminal side of prolyl residues within peptides that are up to approximately 30 amino acids long. The chain is Prolyl oligopeptidase A from Amanita bisporigera (Destroying angel).